Reading from the N-terminus, the 321-residue chain is Protein ABIL3 (321 aa).

2 disordered regions span residues 179–273 and 279–298; these read TIRE…RSAS and EKEA…SKRL. Low complexity-rich tracts occupy residues 204–215 and 240–255; these read SATFSFSSIATA and IRPS…SKSR. Basic and acidic residues predominate over residues 279 to 288; that stretch reads EKEAQKEPEH.

Belongs to the ABI family. In terms of assembly, binds SCAR.

The protein resides in the cytoplasm. It localises to the cytoskeleton. Functionally, involved in regulation of actin and microtubule organization. Part of a WAVE complex that activates the Arp2/3 complex. The chain is Protein ABIL3 (ABIL3) from Arabidopsis thaliana (Mouse-ear cress).